The following is a 277-amino-acid chain: Diaminopimelate epimerase (277 aa).

Substrate contacts are provided by asparagine 11 and asparagine 72. The active-site Proton donor is cysteine 81. Substrate contacts are provided by residues glycine 82–asparagine 83, asparagine 189, and glutamate 207–arginine 208. Cysteine 217 functions as the Proton acceptor in the catalytic mechanism. Glycine 218–threonine 219 contributes to the substrate binding site.

The protein belongs to the diaminopimelate epimerase family. Homodimer.

Its subcellular location is the cytoplasm. It carries out the reaction (2S,6S)-2,6-diaminopimelate = meso-2,6-diaminopimelate. The protein operates within amino-acid biosynthesis; L-lysine biosynthesis via DAP pathway; DL-2,6-diaminopimelate from LL-2,6-diaminopimelate: step 1/1. Functionally, catalyzes the stereoinversion of LL-2,6-diaminopimelate (L,L-DAP) to meso-diaminopimelate (meso-DAP), a precursor of L-lysine and an essential component of the bacterial peptidoglycan. The polypeptide is Diaminopimelate epimerase (Hydrogenobaculum sp. (strain Y04AAS1)).